The sequence spans 508 residues: U4/U6 small nuclear ribonucleoprotein Prp31 (508 aa).

A disordered region spans residues 1–45 (MSLADELLADLEEAGEEDGLYPGGEEGESDGEPGERQVDGGLEDI). Over residues 7–32 (LLADLEEAGEEDGLYPGGEEGESDGE) the composition is skewed to acidic residues. Coiled coils occupy residues 96–131 (EADP…KYSK) and 192–226 (DDEL…MSFI). Residues 226–344 (IAPNLSIIVG…IERKFDKWQE (119 aa)) enclose the Nop domain. Disordered stretches follow at residues 345–368 (PPPV…RGGR) and 442–461 (QSMT…GTSS). The short motif at 362–375 (RKKRGGRRYRKMKE) is the Nuclear localization signal (NLS) element.

This sequence belongs to the PRP31 family. Identified in the spliceosome B complex. Component of the U4/U6-U5 tri-snRNP complex. Component of some MLL1/MLL complex.

The protein localises to the nucleus. Its subcellular location is the nucleus speckle. The protein resides in the cajal body. Involved in pre-mRNA splicing as component of the spliceosome. Required for the assembly of the U4/U5/U6 tri-snRNP complex, one of the building blocks of the spliceosome. This Danio rerio (Zebrafish) protein is U4/U6 small nuclear ribonucleoprotein Prp31 (prpf31).